Here is a 367-residue protein sequence, read N- to C-terminus: MEAEVINQLNNTLNDLEKRSEDIRVYMDYQGKKDRLEEVIGLSEDPELWNDPKRAQEIGKERKILEGIVLTLDNIASGIEDNRMLIEMTVEENDEEGFAAVQEDVAGLEKQMADLEFKRMFNQPADPNNCFIDITAGAGGTEAEDWAGMLFRMYSRYAERKGFRIEILEEDDGEIAGINRATIRVEGEYAYGLLRTETGVHRLVRYSPFDSNNKRHTSFASVFVYPEIDDSIEIEINPADLRIDTYRASGAGGQHINKTDSAVRITHEPTGIVVQCQNDRSQHANKAAAMEMLKSKLYELEMRKRNEEKQALEEGKSDVGWGSQIRSYVLDSSRIKDLRTGYEVGNTKAVLDGDLDGFIEASLKQGV.

Q254 carries the post-translational modification N5-methylglutamine.

This sequence belongs to the prokaryotic/mitochondrial release factor family. Post-translationally, methylated by PrmC. Methylation increases the termination efficiency of RF2.

It localises to the cytoplasm. Its function is as follows. Peptide chain release factor 2 directs the termination of translation in response to the peptide chain termination codons UGA and UAA. The polypeptide is Peptide chain release factor 2 (Neisseria meningitidis serogroup B (strain ATCC BAA-335 / MC58)).